Reading from the N-terminus, the 158-residue chain is NADPH-dependent 7-cyano-7-deazaguanine reductase (158 aa).

Residue C56 is the Thioimide intermediate of the active site. The active-site Proton donor is D63. Residues 78–80 (LES) and 97–98 (HE) each bind substrate.

It belongs to the GTP cyclohydrolase I family. QueF type 1 subfamily.

The protein localises to the cytoplasm. It catalyses the reaction 7-aminomethyl-7-carbaguanine + 2 NADP(+) = 7-cyano-7-deazaguanine + 2 NADPH + 3 H(+). It functions in the pathway tRNA modification; tRNA-queuosine biosynthesis. Catalyzes the NADPH-dependent reduction of 7-cyano-7-deazaguanine (preQ0) to 7-aminomethyl-7-deazaguanine (preQ1). In Nitrobacter hamburgensis (strain DSM 10229 / NCIMB 13809 / X14), this protein is NADPH-dependent 7-cyano-7-deazaguanine reductase.